The chain runs to 455 residues: MKKIEMYHHKKVLVLGLARSGVSAATIMHKLGAFVTVNDQKPFSENPEAQGLLEQGIKVICGSHPIELLDEGFELVIKNPGIPYNNPMIEKALKLKIPVITEVELAYQISEAPIVGITGTNGKTTTTTIIHHMLNAHKENSSLLAGNIGFPASAVAENATSDQYISMELSSFQLMGVQTFKPHISVITNIYEAHLDYHTDRSEYVQAKWHIQQNQTADDFLVINWDQEELKNLTKQTKAQVIPFSTTQRLEQGSYVQNGNIMFDDEVIGSRDSILLPGEHNLENILASVAVAKTLGVTNEEIMYVLETFKGVEHRTQFVVEWQGRKFYNDSKATNILATQSALKGFKNPVVLLAGGLDRGNSFDELLPFFKNVKSLIVFGETADKIGRVGKIAGIEVHYVDDVEAAVPVAYRESAPGDIILLSPACASWDQYRTFEVRGNAYMDAISELIEEVEK.

119 to 125 (GTNGKTT) is a binding site for ATP.

This sequence belongs to the MurCDEF family.

It localises to the cytoplasm. The catalysed reaction is UDP-N-acetyl-alpha-D-muramoyl-L-alanine + D-glutamate + ATP = UDP-N-acetyl-alpha-D-muramoyl-L-alanyl-D-glutamate + ADP + phosphate + H(+). It participates in cell wall biogenesis; peptidoglycan biosynthesis. Cell wall formation. Catalyzes the addition of glutamate to the nucleotide precursor UDP-N-acetylmuramoyl-L-alanine (UMA). In Listeria innocua serovar 6a (strain ATCC BAA-680 / CLIP 11262), this protein is UDP-N-acetylmuramoylalanine--D-glutamate ligase.